A 475-amino-acid polypeptide reads, in one-letter code: Melanopsin (475 aa).

The Extracellular segment spans residues 1-21 (MGTQHRIKVDVPDRVLYTVGS). A helical membrane pass occupies residues 22–42 (CVLVIGSIGITGNLLVLYAFY). The Cytoplasmic segment spans residues 43 to 53 (SNKRLRTPANY). Residues 54-74 (FIMNLAASDFLMSATQAPICF) traverse the membrane as a helical segment. Residues 75–90 (LNSMHTEWILGDIGCN) lie on the Extracellular side of the membrane. C89 and C167 are disulfide-bonded. A helical membrane pass occupies residues 91-111 (FYVFCGALFGITSMMTLLAIS). At 112-134 (VDRYCVITKPLQSIKRSSKKRSC) the chain is on the cytoplasmic side. The chain crosses the membrane as a helical span at residues 135–155 (IIIAFVWLYSLGWSVCPLFGW). Residues 156 to 187 (SSYIPEGLMISCTWDYVSYSPANRSYTMMLCC) lie on the Extracellular side of the membrane. N178 carries an N-linked (GlcNAc...) asparagine glycan. A helical membrane pass occupies residues 188 to 208 (FVFFIPLIIIFHCYLFMFLAI). Residues 209 to 240 (RSTGRNVQKLGSTYNRKSNVSQSVKSEWKLAK) lie on the Cytoplasmic side of the membrane. A helical transmembrane segment spans residues 241–261 (IAFVAIVVFVLSWSPYACVTL). Residues 262-276 (IAWAGYAKTLNPYSK) are Extracellular-facing. A helical membrane pass occupies residues 277-297 (SVPAVIAKASAIYNPIIYAII). K284 carries the N6-(retinylidene)lysine modification. At 298 to 475 (HPRYRRTIRS…EQHQMEASSH (178 aa)) the chain is on the cytoplasmic side. Disordered regions lie at residues 370–390 (VEAARKKQQPHRSRSFSKQAE) and 445–475 (PFGLNSSSTEENADTSDMEVQEQHQMEASSH). Over residues 375–384 (KKQQPHRSRS) the composition is skewed to basic residues. The segment covering 445-454 (PFGLNSSSTE) has biased composition (polar residues). Acidic residues predominate over residues 455–464 (ENADTSDMEV). A compositionally biased stretch (basic and acidic residues) spans 465–475 (QEQHQMEASSH).

This sequence belongs to the G-protein coupled receptor 1 family. Opsin subfamily. As to expression, highest level in the lateral eye. Low level in the brain.

It localises to the cell membrane. Functionally, photoreceptor implicated in non-image-forming responses to light. May be able to isomerize covalently bound all-trans retinal back to 11-cis retinal. The chain is Melanopsin (OPN4) from Podarcis siculus (Italian wall lizard).